Reading from the N-terminus, the 589-residue chain is Splicing factor U2af large subunit B (589 aa).

The segment at 1 to 195 (MMSYEGNGDG…KRRSGFDMAP (195 aa)) is disordered. Residues 14-27 (STENHNENYISLES) show a composition bias toward polar residues. Basic and acidic residues-rich tracts occupy residues 29-100 (PFHE…DRQR) and 109-145 (RDRSRERSEKRDDLDDDHHRRSRDRDRRRSRDRDREV). Basic residues-rich tracts occupy residues 146–156 (RHRRRSRSRSR) and 164–188 (RSEHRHKSEHRSRSRSRSRSKSKRR). RRM domains lie at 255–338 (RRVY…RPTD), 375–453 (DRIF…RAIQ), and 494–580 (QVVT…YPED).

The protein belongs to the splicing factor SR family. Component of the spliceosome. Interacts with SF1 in the nucleus.

It localises to the nucleus. Its subcellular location is the nucleus speckle. Functionally, necessary for the splicing of pre-mRNA. This chain is Splicing factor U2af large subunit B, found in Arabidopsis thaliana (Mouse-ear cress).